The primary structure comprises 633 residues: 1-deoxy-D-xylulose-5-phosphate synthase 2 (633 aa).

Thiamine diphosphate-binding positions include histidine 73 and 113–115 (SHA). Aspartate 145 is a Mg(2+) binding site. Residues 146–147 (GA), asparagine 175, tyrosine 286, and glutamate 367 each bind thiamine diphosphate. Asparagine 175 provides a ligand contact to Mg(2+).

Belongs to the transketolase family. DXPS subfamily. As to quaternary structure, homodimer. It depends on Mg(2+) as a cofactor. Requires thiamine diphosphate as cofactor.

It carries out the reaction D-glyceraldehyde 3-phosphate + pyruvate + H(+) = 1-deoxy-D-xylulose 5-phosphate + CO2. The protein operates within metabolic intermediate biosynthesis; 1-deoxy-D-xylulose 5-phosphate biosynthesis; 1-deoxy-D-xylulose 5-phosphate from D-glyceraldehyde 3-phosphate and pyruvate: step 1/1. Functionally, catalyzes the acyloin condensation reaction between C atoms 2 and 3 of pyruvate and glyceraldehyde 3-phosphate to yield 1-deoxy-D-xylulose-5-phosphate (DXP). The sequence is that of 1-deoxy-D-xylulose-5-phosphate synthase 2 from Kitasatospora griseola (Streptomyces griseolosporeus).